A 151-amino-acid polypeptide reads, in one-letter code: Transcriptional regulator MraZ (151 aa).

2 SpoVT-AbrB domains span residues 5 to 51 (AHEL…PVAE) and 81 to 124 (AEIL…GREQ).

It belongs to the MraZ family. Forms oligomers.

It is found in the cytoplasm. The protein localises to the nucleoid. The sequence is that of Transcriptional regulator MraZ from Neisseria meningitidis serogroup C / serotype 2a (strain ATCC 700532 / DSM 15464 / FAM18).